An 829-amino-acid chain; its full sequence is Leucine--tRNA ligase (829 aa).

The 'HIGH' region motif lies at 42–52; it reads PYPSGRIHMGH. A 'KMSKS' region motif is present at residues 584–588; that stretch reads KMSKS. An ATP-binding site is contributed by Lys-587.

It belongs to the class-I aminoacyl-tRNA synthetase family.

It localises to the cytoplasm. The catalysed reaction is tRNA(Leu) + L-leucine + ATP = L-leucyl-tRNA(Leu) + AMP + diphosphate. The protein is Leucine--tRNA ligase of Syntrophobacter fumaroxidans (strain DSM 10017 / MPOB).